Here is a 570-residue protein sequence, read N- to C-terminus: Sulfite reductase [NADPH] hemoprotein beta-component (570 aa).

[4Fe-4S] cluster contacts are provided by cysteine 434, cysteine 440, cysteine 479, and cysteine 483. Cysteine 483 is a siroheme binding site.

Belongs to the nitrite and sulfite reductase 4Fe-4S domain family. In terms of assembly, alpha(8)-beta(8). The alpha component is a flavoprotein, the beta component is a hemoprotein. It depends on siroheme as a cofactor. [4Fe-4S] cluster serves as cofactor.

It carries out the reaction hydrogen sulfide + 3 NADP(+) + 3 H2O = sulfite + 3 NADPH + 4 H(+). The protein operates within sulfur metabolism; hydrogen sulfide biosynthesis; hydrogen sulfide from sulfite (NADPH route): step 1/1. Its function is as follows. Component of the sulfite reductase complex that catalyzes the 6-electron reduction of sulfite to sulfide. This is one of several activities required for the biosynthesis of L-cysteine from sulfate. The protein is Sulfite reductase [NADPH] hemoprotein beta-component of Escherichia coli O6:H1 (strain CFT073 / ATCC 700928 / UPEC).